Reading from the N-terminus, the 198-residue chain is Large ribosomal subunit protein bL9 (198 aa).

This sequence belongs to the bacterial ribosomal protein bL9 family.

In terms of biological role, binds to the 23S rRNA. The polypeptide is Large ribosomal subunit protein bL9 (Bartonella tribocorum (strain CIP 105476 / IBS 506)).